The following is a 215-amino-acid chain: tRNA (guanine-N(7)-)-methyltransferase (215 aa).

E44, E69, D96, and D118 together coordinate S-adenosyl-L-methionine. Residue D118 is part of the active site. Residue K122 coordinates substrate. The tract at residues 124–129 (RHEKRR) is interaction with RNA. Residues D154 and 192-195 (TEYE) each bind substrate.

The protein belongs to the class I-like SAM-binding methyltransferase superfamily. TrmB family.

The catalysed reaction is guanosine(46) in tRNA + S-adenosyl-L-methionine = N(7)-methylguanosine(46) in tRNA + S-adenosyl-L-homocysteine. The protein operates within tRNA modification; N(7)-methylguanine-tRNA biosynthesis. Its function is as follows. Catalyzes the formation of N(7)-methylguanine at position 46 (m7G46) in tRNA. The protein is tRNA (guanine-N(7)-)-methyltransferase of Limosilactobacillus fermentum (strain NBRC 3956 / LMG 18251) (Lactobacillus fermentum).